We begin with the raw amino-acid sequence, 231 residues long: Endonuclease NucS (231 aa).

It belongs to the NucS endonuclease family.

Its subcellular location is the cytoplasm. Cleaves both 3' and 5' ssDNA extremities of branched DNA structures. The chain is Endonuclease NucS from Pseudarthrobacter chlorophenolicus (strain ATCC 700700 / DSM 12829 / CIP 107037 / JCM 12360 / KCTC 9906 / NCIMB 13794 / A6) (Arthrobacter chlorophenolicus).